Consider the following 311-residue polypeptide: Glycerol-3-phosphate dehydrogenase [NAD(P)+] (311 aa).

Positions 11, 30, 31, and 95 each coordinate NADPH. Sn-glycerol 3-phosphate is bound by residues lysine 95, glycine 123, and serine 125. Alanine 127 lines the NADPH pocket. The sn-glycerol 3-phosphate site is built by lysine 177, aspartate 230, serine 240, arginine 241, and asparagine 242. Residue lysine 177 is the Proton acceptor of the active site. Arginine 241 contributes to the NADPH binding site. NADPH contacts are provided by valine 265 and glutamate 267.

The protein belongs to the NAD-dependent glycerol-3-phosphate dehydrogenase family.

The protein localises to the cytoplasm. The enzyme catalyses sn-glycerol 3-phosphate + NAD(+) = dihydroxyacetone phosphate + NADH + H(+). It catalyses the reaction sn-glycerol 3-phosphate + NADP(+) = dihydroxyacetone phosphate + NADPH + H(+). It participates in membrane lipid metabolism; glycerophospholipid metabolism. Functionally, catalyzes the reduction of the glycolytic intermediate dihydroxyacetone phosphate (DHAP) to sn-glycerol 3-phosphate (G3P), the key precursor for phospholipid synthesis. The protein is Glycerol-3-phosphate dehydrogenase [NAD(P)+] of Bartonella bacilliformis (strain ATCC 35685 / KC583 / Herrer 020/F12,63).